Reading from the N-terminus, the 496-residue chain is Inosine-5'-monophosphate dehydrogenase (496 aa).

CBS domains follow at residues 96 to 152 (VIKD…TKKV) and 156 to 212 (MTKD…PQAA). NAD(+)-binding positions include D247 and 299–301 (GIG). The K(+) site is built by G301 and G303. S304 serves as a coordination point for IMP. A K(+)-binding site is contributed by C306. Catalysis depends on C306, which acts as the Thioimidate intermediate. Residues 339-341 (DGG), 362-363 (GS), and 386-390 (YRGMG) contribute to the IMP site. The active-site Proton acceptor is R405. E423 lines the IMP pocket. K(+) contacts are provided by E477, S478, and H479.

This sequence belongs to the IMPDH/GMPR family. Homotetramer. It depends on K(+) as a cofactor.

It catalyses the reaction IMP + NAD(+) + H2O = XMP + NADH + H(+). The protein operates within purine metabolism; XMP biosynthesis via de novo pathway; XMP from IMP: step 1/1. Its activity is regulated as follows. Mycophenolic acid (MPA) is a non-competitive inhibitor that prevents formation of the closed enzyme conformation by binding to the same site as the amobile flap. In contrast, mizoribine monophosphate (MZP) is a competitive inhibitor that induces the closed conformation. MPA is a potent inhibitor of mammalian IMPDHs but a poor inhibitor of the bacterial enzymes. MZP is a more potent inhibitor of bacterial IMPDH. Catalyzes the conversion of inosine 5'-phosphate (IMP) to xanthosine 5'-phosphate (XMP), the first committed and rate-limiting step in the de novo synthesis of guanine nucleotides, and therefore plays an important role in the regulation of cell growth. The sequence is that of Inosine-5'-monophosphate dehydrogenase from Methanocaldococcus jannaschii (strain ATCC 43067 / DSM 2661 / JAL-1 / JCM 10045 / NBRC 100440) (Methanococcus jannaschii).